A 365-amino-acid chain; its full sequence is DNA replication and repair protein RecF (365 aa).

30 to 37 provides a ligand contact to ATP; the sequence is GNNGMGKT.

This sequence belongs to the RecF family.

Its subcellular location is the cytoplasm. In terms of biological role, the RecF protein is involved in DNA metabolism; it is required for DNA replication and normal SOS inducibility. RecF binds preferentially to single-stranded, linear DNA. It also seems to bind ATP. The chain is DNA replication and repair protein RecF from Parabacteroides distasonis (strain ATCC 8503 / DSM 20701 / CIP 104284 / JCM 5825 / NCTC 11152).